Reading from the N-terminus, the 92-residue chain is Isoleucine--tRNA ligase (92 aa).

Residues cysteine 55, cysteine 58, cysteine 75, and cysteine 78 each coordinate Zn(2+).

The protein belongs to the class-I aminoacyl-tRNA synthetase family. IleS type 1 subfamily. In terms of assembly, monomer. Zn(2+) serves as cofactor.

It is found in the cytoplasm. The catalysed reaction is tRNA(Ile) + L-isoleucine + ATP = L-isoleucyl-tRNA(Ile) + AMP + diphosphate. Its function is as follows. Catalyzes the attachment of isoleucine to tRNA(Ile). As IleRS can inadvertently accommodate and process structurally similar amino acids such as valine, to avoid such errors it has two additional distinct tRNA(Ile)-dependent editing activities. One activity is designated as 'pretransfer' editing and involves the hydrolysis of activated Val-AMP. The other activity is designated 'posttransfer' editing and involves deacylation of mischarged Val-tRNA(Ile). The sequence is that of Isoleucine--tRNA ligase (ileS) from Klebsiella aerogenes (Enterobacter aerogenes).